Reading from the N-terminus, the 148-residue chain is Cytochrome c oxidase subunit 6, mitochondrial (148 aa).

The N-terminal 40 residues, 1-40 (MASFFRTAVRGPSAGLFRAVARPQPIAARVSLFSTSSRFR), are a transit peptide targeting the mitochondrion.

The protein belongs to the cytochrome c oxidase subunit 5A family. As to quaternary structure, component of the cytochrome c oxidase (complex IV, CIV), a multisubunit enzyme composed of 11 subunits. The complex is composed of a catalytic core of 3 subunits Cox1, Cox2 and Cox3, encoded in the mitochondrial DNA, and 8 supernumerary subunits Cox4, Cox5a/Cox5, Cox6, Cox7, Cox8, Cox7a/Cox9, Cox6b/Cox12 and Cox6a/Cox13, which are encoded in the nuclear genome. The complex exists as a monomer or a dimer and forms respiratory supercomplexes (SCs) in the inner mitochondrial membrane with NADH-ubiquinone oxidoreductase (complex I, CI) and ubiquinol-cytochrome c oxidoreductase (cytochrome b-c1 complex, complex III, CIII), resulting in various different assemblies (supercomplexes I(1)IV(1), I(1)III(3)IV(2), III(2)IV(1) and III(2)IV(2) as well as larger supercomplexes of compositions like I(1)III(2)IV(5-6)).

The protein localises to the mitochondrion inner membrane. Its pathway is energy metabolism; oxidative phosphorylation. Functionally, component of the cytochrome c oxidase, the last enzyme in the mitochondrial electron transport chain which drives oxidative phosphorylation. The respiratory chain contains 3 multisubunit complexes succinate dehydrogenase (complex II, CII), ubiquinol-cytochrome c oxidoreductase (cytochrome b-c1 complex, complex III, CIII) and cytochrome c oxidase (complex IV, CIV), that cooperate to transfer electrons derived from NADH and succinate to molecular oxygen, creating an electrochemical gradient over the inner membrane that drives transmembrane transport and the ATP synthase. Cytochrome c oxidase is the component of the respiratory chain that catalyzes the reduction of oxygen to water. Electrons originating from reduced cytochrome c in the intermembrane space (IMS) are transferred via the dinuclear copper A center (CU(A)) of Cox2 and heme A of Cox1 to the active site in Cox1, a binuclear center (BNC) formed by heme A3 and copper B (CU(B)). The BNC reduces molecular oxygen to 2 water molecules using 4 electrons from cytochrome c in the IMS and 4 protons from the mitochondrial matrix. The protein is Cytochrome c oxidase subunit 6, mitochondrial (cox-6) of Neurospora crassa (strain ATCC 24698 / 74-OR23-1A / CBS 708.71 / DSM 1257 / FGSC 987).